A 130-amino-acid polypeptide reads, in one-letter code: Small ribosomal subunit protein uS11 (130 aa).

The protein belongs to the universal ribosomal protein uS11 family. Part of the 30S ribosomal subunit.

Located on the platform of the 30S subunit. In Ignicoccus hospitalis (strain KIN4/I / DSM 18386 / JCM 14125), this protein is Small ribosomal subunit protein uS11.